A 308-amino-acid chain; its full sequence is Ribonuclease HIII (308 aa).

One can recognise an RNase H type-2 domain in the interval 88-304 (FHCIGSDEAG…RDKAIHLINQ (217 aa)). A divalent metal cation is bound by residues aspartate 94, glutamate 95, and aspartate 199.

This sequence belongs to the RNase HII family. RnhC subfamily. It depends on Mn(2+) as a cofactor. Mg(2+) is required as a cofactor.

The protein localises to the cytoplasm. The enzyme catalyses Endonucleolytic cleavage to 5'-phosphomonoester.. Its function is as follows. Endonuclease that specifically degrades the RNA of RNA-DNA hybrids. This Staphylococcus epidermidis (strain ATCC 35984 / DSM 28319 / BCRC 17069 / CCUG 31568 / BM 3577 / RP62A) protein is Ribonuclease HIII.